Consider the following 302-residue polypeptide: Large ribosomal subunit protein bL28m (302 aa).

The protein belongs to the bacterial ribosomal protein bL28 family. In terms of assembly, component of the mitochondrial ribosome large subunit (39S) which comprises a 16S rRNA and about 50 distinct proteins.

It localises to the mitochondrion. This Drosophila melanogaster (Fruit fly) protein is Large ribosomal subunit protein bL28m (mRpL28).